The primary structure comprises 856 residues: PR domain zinc finger protein 1 (856 aa).

In terms of domain architecture, SET spans 115 to 233 (PRNLLFKYAA…ANQELLVWYC (119 aa)). 2 disordered regions span residues 357–399 (THSP…APGL) and 532–571 (GAAASMKDESSPPSGSPTAGTAATSEHVVQPKATSSVMAA). 2 stretches are compositionally biased toward low complexity: residues 373–393 (SSPEQSLKSSSPHSSPGNTVS) and 542–556 (SPPSGSPTAGTAATS). An interaction with PIAS1 region spans residues 558 to 605 (HVVQPKATSSVMAAPSTDGAMNLIKNKRNMTGYKTLPYPLKKQNGKIK). C2H2-type zinc fingers lie at residues 606–628 (YECNVCAKTFGQLSNLKVHLRVH), 634–656 (FKCQTCNKGFTQLAHLQKHYLVH), 662–684 (HECQVCHKRFSSTSNLKTHLRLH), and 690–712 (YQCKVCPAKFTQFVHLKLHKRLH). Lys-847 participates in a covalent cross-link: Glycyl lysine isopeptide (Lys-Gly) (interchain with G-Cter in SUMO1); alternate. Lys-847 participates in a covalent cross-link: Glycyl lysine isopeptide (Lys-Gly) (interchain with G-Cter in SUMO2); alternate.

This sequence belongs to the class V-like SAM-binding methyltransferase superfamily. As to quaternary structure, interacts with PRMT5. Interacts with FBXO10. Interacts with FBXO11. Interacts with multiple nuclear sumoylation E3 ligases, including CBX4, PIAS1, PIAS2, PIAS3, PIAS4, PML and RNF4, but not RANBP2. Interacts with LDB1, SMARCD3 and SMARCC1. Interacts with EEIG1; following TNFSF11/RANKL stimulation in bone marrow-derived macrophages, the interaction promotes the binding of PRDM1/BLIMP1 to the gene promoter of IRF8. In terms of processing, sumoylation at Lys-847 by PIAS1 increases transcriptional repressor activity, and is critical for plasma cell differentiation. Can be sumoylated with SUMO1 and SUMO2 by PML. Degradation of the wild-type protein mostly depends upon sumoylation, rather than ubiquitination. Desumoylated by SENP1 and SENP6. Ubiquitinated by SCF(FBXO11), leading to its degradation by the proteasome. Expressed in bone marrow macrophages (at protein level). Expressed in innate lymphocytes, including tissue-resident conventional natural killer (cNK) cells in liver. Expressed also weakly in tissue-resident natural killer (trNK) and natural killer T (NKT) cells in liver. In terms of tissue distribution, expressed in bone marrow, spleen and lymph node but not in brain, heart, kidney, liver, ovary or muscle. Weak expression detected in the lung. As to expression, expressed only in the yolk sac. Expressed in embryo, yolk sac, placenta, splenocytes, and activated T-cells.

It is found in the nucleus. Its subcellular location is the cytoplasm. In terms of biological role, transcription factor that mediates a transcriptional program in various innate and adaptive immune tissue-resident lymphocyte T cell types such as tissue-resident memory T (Trm), natural killer (trNK) and natural killer T (NKT) cells and negatively regulates gene expression of proteins that promote the egress of tissue-resident T-cell populations from non-lymphoid organs. Plays a role in the development, retention and long-term establishment of adaptive and innate tissue-resident lymphocyte T cell types in non-lymphoid organs, such as the skin and gut, but also in other nonbarrier tissues like liver and kidney, and therefore may provide immediate immunological protection against reactivating infections or viral reinfection. Binds specifically to the PRDI element in the promoter of the beta-interferon gene. Drives the maturation of B-lymphocytes into Ig secreting cells. Associates with the transcriptional repressor ZNF683 to chromatin at gene promoter regions. Binds to the promoter and acts as a transcriptional repressor of IRF8, thereby promotes transcription of osteoclast differentiation factors such as NFATC1 and EEIG1. The polypeptide is PR domain zinc finger protein 1 (Prdm1) (Mus musculus (Mouse)).